We begin with the raw amino-acid sequence, 321 residues long: Genome polyprotein (321 aa).

Residues 1–52 lie on the Cytoplasmic side of the membrane; the sequence is RNLGKVIDTLTCGFADLMGYIPLVGAPLGGAARALAHGVRVLEDGVNYATGN. The segment at 6–57 is interaction with APOA2; the sequence is VIDTLTCGFADLMGYIPLVGAPLGGAARALAHGVRVLEDGVNYATGNLPGCS. Positions 48–51 are important for lipid droplets localization; that stretch reads YATG. The helical transmembrane segment at 53–73 threads the bilayer; it reads LPGCSFSLFLLALLSCLTVPA. Positions 62–75 are cleaved as a propeptide — ER anchor for the core protein, removed in mature form by host signal peptidase; sequence LLALLSCLTVPASA. At 74–242 the chain is on the lumenal side; sequence SAYQVRNSTG…AGAHWGVLAG (169 aa). 3 N-linked (GlcNAc...) asparagine; by host glycosylation sites follow: Asn80, Asn93, and Asn118. The important for fusion stretch occupies residues 149–180; sequence LVGSATLCSALYVGDLCGSIFLVGQLFTFSPR. N-linked (GlcNAc...) asparagine; by host glycosylation occurs at Asn189. Residues 243–263 traverse the membrane as a helical segment; it reads IAYFSMVGNWAKVLVVLLLFA. The Lumenal segment spans residues 264–321; it reads GVDAETTVTGGSAAHGALGIASLFNQGARQNIQLINTNGSWHINSTALNCNDSLNTGW. Residues 268-294 form an HVR1 region; the sequence is ETTVTGGSAAHGALGIASLFNQGARQN. 3 N-linked (GlcNAc...) (high mannose) asparagine; by host glycosylation sites follow: Asn301, Asn307, and Asn314.

The protein belongs to the hepacivirus polyprotein family. As to quaternary structure, homooligomer. Interacts with E1 (via C-terminus). Interacts with the non-structural protein 5A. Interacts (via N-terminus) with host STAT1 (via SH2 domain); this interaction results in decreased STAT1 phosphorylation and ubiquitin-mediated proteasome-dependent STAT1 degradation, leading to decreased IFN-stimulated gene transcription. Interacts with host STAT3; this interaction constitutively activates STAT3. Interacts with host LTBR receptor. Interacts with host TNFRSF1A receptor and possibly induces apoptosis. Interacts with host HNRPK. Interacts with host YWHAE. Interacts with host UBE3A/E6AP. Interacts with host DDX3X. Interacts with host APOA2. Interacts with host RXRA protein. Interacts with host SP110 isoform 3/Sp110b; this interaction sequesters the transcriptional corepressor SP110 away from the nucleus. Interacts with host CREB3 nuclear transcription protein; this interaction triggers cell transformation. Interacts with host ACY3. Interacts with host C1QR1. Interacts with host RBM24; this interaction, which enhances the interaction of the mature core protein with 5'-UTR, may inhibit viral translation and favor replication. Interacts with host EIF2AK2/PKR; this interaction induces the autophosphorylation of EIF2AK2. Part of the viral assembly initiation complex composed of NS2, E1, E2, NS3, NS4A, NS5A and the mature core protein. In terms of assembly, forms a heterodimer with envelope glycoprotein E2. Interacts with mature core protein. Interacts with protease NS2. The heterodimer E1/E2 interacts with host CLDN1; this interaction plays a role in viral entry into host cell. Interacts with host SPSB2 (via C-terminus). Part of the viral assembly initiation complex composed of NS2, E1, E2, NS3, NS4A, NS5A and the mature core protein. Forms a heterodimer with envelope glycoprotein E1. Interacts with host CD81 and SCARB1 receptors; these interactions play a role in viral entry into host cell. Interacts with host EIF2AK2/PKR; this interaction inhibits EIF2AK2 and probably allows the virus to evade the innate immune response. Interacts with host CD209/DC-SIGN and CLEC4M/DC-SIGNR. Interact with host SPCS1; this interaction is essential for viral particle assembly. Interacts with protease NS2. The heterodimer E1/E2 interacts with host CLDN1; this interaction plays a role in viral entry into host cell. Part of the viral assembly initiation complex composed of NS2, E1, E2, NS3, NS4A, NS5A and the mature core protein. Post-translationally, specific enzymatic cleavages in vivo yield mature proteins. The structural proteins, core, E1, E2 and p7 are produced by proteolytic processing by host signal peptidases. The core protein precursor is synthesized as a 23 kDa, which is retained in the ER membrane through the hydrophobic signal peptide. Cleavage by the signal peptidase releases the 21 kDa mature core protein. The cleavage of the core protein precursor occurs between aminoacids 176 and 188 but the exact cleavage site is not known. Some degraded forms of the core protein appear as well during the course of infection. The other proteins (p7, NS2, NS3, NS4A, NS4B, NS5A and NS5B) are cleaved by the viral proteases. Autoprocessing between NS2 and NS3 is mediated by the NS2 cysteine protease catalytic domain and regulated by the NS3 N-terminal domain. In terms of processing, phosphorylated by host PKC and PKA. Ubiquitinated; mediated by UBE3A and leading to core protein subsequent proteasomal degradation. Post-translationally, highly N-glycosylated.

The protein resides in the host endoplasmic reticulum membrane. Its subcellular location is the host mitochondrion membrane. It localises to the virion. It is found in the host cytoplasm. The protein localises to the host nucleus. The protein resides in the host lipid droplet. Its subcellular location is the virion membrane. In terms of biological role, packages viral RNA to form a viral nucleocapsid, and promotes virion budding. Participates in the viral particle production as a result of its interaction with the non-structural protein 5A. Binds RNA and may function as a RNA chaperone to induce the RNA structural rearrangements taking place during virus replication. Modulates viral translation initiation by interacting with viral IRES and 40S ribosomal subunit. Affects various cell signaling pathways, host immunity and lipid metabolism. Prevents the establishment of cellular antiviral state by blocking the interferon-alpha/beta (IFN-alpha/beta) and IFN-gamma signaling pathways and by blocking the formation of phosphorylated STAT1 and promoting ubiquitin-mediated proteasome-dependent degradation of STAT1. Activates STAT3 leading to cellular transformation. Regulates the activity of cellular genes, including c-myc and c-fos. May repress the promoter of p53, and sequester CREB3 and SP110 isoform 3/Sp110b in the cytoplasm. Represses cell cycle negative regulating factor CDKN1A, thereby interrupting an important check point of normal cell cycle regulation. Targets transcription factors involved in the regulation of inflammatory responses and in the immune response: suppresses TNF-induced NF-kappa-B activation, and activates AP-1. Binds to dendritic cells (DCs) via C1QR1, resulting in down-regulation of T-lymphocytes proliferation. Alters lipid metabolism by interacting with hepatocellular proteins involved in lipid accumulation and storage. Induces up-regulation of FAS promoter activity, and thereby contributes to the increased triglyceride accumulation in hepatocytes (steatosis). Forms a heterodimer with envelope glycoprotein E2, which mediates virus attachment to the host cell, virion internalization through clathrin-dependent endocytosis and fusion with host membrane. Fusion with the host cell is most likely mediated by both E1 and E2, through conformational rearrangements of the heterodimer required for fusion rather than a classical class II fusion mechanism. E1/E2 heterodimer binds host apolipoproteins such as APOB and ApoE thereby forming a lipo-viro-particle (LVP). APOE associated to the LVP allows the initial virus attachment to cell surface receptors such as the heparan sulfate proteoglycans (HSPGs), syndecan-1 (SDC1), syndecan-1 (SDC2), the low-density lipoprotein receptor (LDLR) and scavenger receptor class B type I (SCARB1). The cholesterol transfer activity of SCARB1 allows E2 exposure and binding of E2 to SCARB1 and the tetraspanin CD81. E1/E2 heterodimer binding on CD81 activates the epithelial growth factor receptor (EGFR) signaling pathway. Diffusion of the complex E1-E2-EGFR-SCARB1-CD81 to the cell lateral membrane allows further interaction with Claudin 1 (CLDN1) and occludin (OCLN) to finally trigger HCV entry. Functionally, forms a heterodimer with envelope glycoprotein E1, which mediates virus attachment to the host cell, virion internalization through clathrin-dependent endocytosis and fusion with host membrane. Fusion with the host cell is most likely mediated by both E1 and E2, through conformational rearrangements of the heterodimer required for fusion rather than a classical class II fusion mechanism. The interaction between envelope glycoprotein E2 and host apolipoprotein E/APOE allows the proper assembly, maturation and infectivity of the viral particles. This interaction is probably promoted via the up-regulation of cellular autophagy by the virus. E1/E2 heterodimer binds host apolipoproteins such as APOB and APOE thereby forming a lipo-viro-particle (LVP). APOE associated to the LVP allows the initial virus attachment to cell surface receptors such as the heparan sulfate proteoglycans (HSPGs), syndecan-1 (SDC1), syndecan-1 (SDC2), the low-density lipoprotein receptor (LDLR) and scavenger receptor class B type I (SCARB1). The cholesterol transfer activity of SCARB1 allows E2 exposure and binding of E2 to SCARB1 and the tetraspanin CD81. E1/E2 heterodimer binding on CD81 activates the epithelial growth factor receptor (EGFR) signaling pathway. Diffusion of the complex E1-E2-EGFR-SCARB1-CD81 to the cell lateral membrane allows further interaction with Claudin 1 (CLDN1) and occludin (OCLN) to finally trigger HCV entry. Inhibits host EIF2AK2/PKR activation, preventing the establishment of an antiviral state. Viral ligand for CD209/DC-SIGN and CLEC4M/DC-SIGNR, which are respectively found on dendritic cells (DCs), and on liver sinusoidal endothelial cells and macrophage-like cells of lymph node sinuses. These interactions allow the capture of circulating HCV particles by these cells and subsequent facilitated transmission to permissive cells such as hepatocytes and lymphocyte subpopulations. This Homo sapiens (Human) protein is Genome polyprotein.